Consider the following 495-residue polypeptide: Glucose-6-phosphate 1-dehydrogenase (495 aa).

Lys-51 is covalently cross-linked (Isoglutamyl lysine isopeptide (Lys-Gln) (interchain with Q-Cter in protein Pup)). Residues 94–95 and Lys-154 contribute to the NADP(+) site; that span reads DL. His-184, Lys-188, Glu-222, and Asp-241 together coordinate substrate. Catalysis depends on His-246, which acts as the Proton acceptor. Residue Lys-345 participates in substrate binding.

This sequence belongs to the glucose-6-phosphate dehydrogenase family.

The catalysed reaction is D-glucose 6-phosphate + NADP(+) = 6-phospho-D-glucono-1,5-lactone + NADPH + H(+). Its pathway is carbohydrate degradation; pentose phosphate pathway; D-ribulose 5-phosphate from D-glucose 6-phosphate (oxidative stage): step 1/3. Its function is as follows. Catalyzes the oxidation of glucose 6-phosphate to 6-phosphogluconolactone. In Mycolicibacterium smegmatis (strain ATCC 700084 / mc(2)155) (Mycobacterium smegmatis), this protein is Glucose-6-phosphate 1-dehydrogenase.